The sequence spans 107 residues: Small ribosomal subunit protein uS10c (107 aa).

It belongs to the universal ribosomal protein uS10 family. Part of the 30S ribosomal subunit.

The protein resides in the plastid. The protein localises to the chloroplast. In terms of biological role, involved in the binding of tRNA to the ribosomes. The polypeptide is Small ribosomal subunit protein uS10c (Thalassiosira pseudonana (Marine diatom)).